We begin with the raw amino-acid sequence, 601 residues long: Abscisic acid cluster transcription factor abl7 (601 aa).

Residues 13-40 (CDECRRRKLKCDRVRPQCGTCALSESEC) constitute a DNA-binding region (zn(2)-C6 fungal-type).

Its subcellular location is the nucleus. Functionally, transcription factor that regulates the expression of the gene cluster that mediates the biosynthesis of abscisic acid (ABA), a phytohormone that acts antagonistically toward salicylic acid (SA), jasmonic acid (JA) and ethylene (ETH) signaling, to impede plant defense responses. The sequence is that of Abscisic acid cluster transcription factor abl7 from Leptosphaeria maculans (strain JN3 / isolate v23.1.3 / race Av1-4-5-6-7-8) (Blackleg fungus).